The chain runs to 342 residues: Polyprenyl transferase trt2 (342 aa).

9 consecutive transmembrane segments (helical) span residues 71 to 91, 95 to 115, 141 to 161, 163 to 183, 187 to 207, 216 to 236, 261 to 278, 282 to 304, and 319 to 339; these read VVGV…TVLL, IILS…NDLI, AALL…LLPS, CTVE…GKRF, PQLI…SLEV, TLSM…VYAC, LAYG…LGGV, LGLP…FLSV, and AKSS…LEYL.

The protein belongs to the UbiA prenyltransferase family. Mg(2+) is required as a cofactor.

Its subcellular location is the membrane. It catalyses the reaction 3,5-dimethylorsellinate + (2E,6E)-farnesyl diphosphate = (3R)-3-farnesyl-6-hydroxy-2,3,5-trimethyl-4-oxocyclohexa-1,5-diene-1-carboxylate + diphosphate + H(+). The protein operates within secondary metabolite biosynthesis; terpenoid biosynthesis. Polyprenyl transferase; part of the gene cluster that mediates the biosynthesis of terretonin, a fungal meroterpenoid that acts as a mycotoxin. The first step of the pathway is the synthesis of 3,5-dimethylorsellinic acid (DMOA) by the polyketide synthase trt4. DMOA is then prenylated into farnesyl-DMOA by the polyprenyl transferase trt2. Methylation by the methyltransferase trt5 then leads to farnesyl-DMOA methyl ester which is further subject to epoxidation by the FAD-dependent monooxygenase trt8 to yield epoxyfarnesyl-DMOA methyl ester. Cyclization of epoxyfarnesyl-DMOA methyl ester by the terpene cyclase trt1 leads to a tetracycle intermediate which is in turn converted to preterretonin. Dehydrogenase trt9 comes next to transform preterretonin to preterrenoid. The FAD-dependent monooxygenase trt3 is then required for the C-hydroxylation at C16 of preterrenoid to yield terrenoid. The cytochrome P450 trt6 catalyzes three successive oxidations to transform terrenoid into an unstable intermediate, which then undergoes the D-ring expansion and unusual rearrangement of the methoxy group to afford the core skeleton of terretonin. Trt14 catalyzes the D-ring expansion of terretonin involving intramolecular methoxy rearrangement as well as the hydrolysis of the expanded D-ring and the methyl ester moiety. Finally, the nonheme iron-dependent dioxygenase trt7 accomplishes the last two oxidation reactions steps to complete the biosynthesis of terretonin. Terretonin C is produced via spontaneous decarboxylation of the terretonin precursor. Another shunt product of the terretonin biosynthesis is dihydrofarnesyl-DMOA, derived from epoxyfarnesyl-DMOA through hydrolysis of the epoxide. The chain is Polyprenyl transferase trt2 from Aspergillus terreus (strain NIH 2624 / FGSC A1156).